A 241-amino-acid polypeptide reads, in one-letter code: Sugar fermentation stimulation protein homolog (241 aa).

It belongs to the SfsA family.

This Halorhodospira halophila (strain DSM 244 / SL1) (Ectothiorhodospira halophila (strain DSM 244 / SL1)) protein is Sugar fermentation stimulation protein homolog.